Reading from the N-terminus, the 259-residue chain is Tryptophan synthase alpha chain (259 aa).

Residues glutamate 35 and aspartate 46 each act as proton acceptor in the active site.

It belongs to the TrpA family. As to quaternary structure, tetramer of two alpha and two beta chains.

The enzyme catalyses (1S,2R)-1-C-(indol-3-yl)glycerol 3-phosphate + L-serine = D-glyceraldehyde 3-phosphate + L-tryptophan + H2O. It functions in the pathway amino-acid biosynthesis; L-tryptophan biosynthesis; L-tryptophan from chorismate: step 5/5. Its function is as follows. The alpha subunit is responsible for the aldol cleavage of indoleglycerol phosphate to indole and glyceraldehyde 3-phosphate. The chain is Tryptophan synthase alpha chain from Methanococcus maripaludis (strain C5 / ATCC BAA-1333).